Here is a 649-residue protein sequence, read N- to C-terminus: ATP-dependent DNA helicase Q1 (649 aa).

In terms of domain architecture, Helicase ATP-binding spans 100-275 (INVTMAGKEV…QKILCIEKCF (176 aa)). Residue 113-120 (MPTGGGKG) participates in ATP binding. Residues 219-222 (DEVH) carry the DEVH box motif. Residues 300–451 (FIEDIVKLIN…EMVSYCQNIS (152 aa)) form the Helicase C-terminal domain. The Zn(2+) site is built by Cys-453, Cys-471, Cys-475, and Cys-478. An N6-acetyllysine mark is found at Lys-514 and Lys-522. Phosphoserine occurs at positions 597 and 602. The span at 597 to 608 (SFRVESSQTCHS) shows a compositional bias: polar residues. The segment at 597 to 649 (SFRVESSQTCHSEQGDKKMEEKNSGNFQKKAANMLQQSGSKNTGAKKRKIDDA) is disordered. Residues 609-619 (EQGDKKMEEKN) are compositionally biased toward basic and acidic residues. Residues 630–639 (MLQQSGSKNT) show a composition bias toward polar residues. Ser-634 carries the phosphoserine modification. Over residues 640-649 (GAKKRKIDDA) the composition is skewed to basic residues.

Belongs to the helicase family. RecQ subfamily. In terms of assembly, may form homodimers or higher order oligomers. Interacts with EXO1. Interacts with MLH1. Interacts with PARP1. Requires Mg(2+) as cofactor. It depends on Mn(2+) as a cofactor. The cofactor is Zn(2+).

The protein localises to the nucleus. The catalysed reaction is Couples ATP hydrolysis with the unwinding of duplex DNA by translocating in the 3'-5' direction.. It catalyses the reaction ATP + H2O = ADP + phosphate + H(+). It carries out the reaction dATP + H2O = dADP + phosphate + H(+). In terms of biological role, DNA helicase that plays a role in DNA damage repair and genome stability. Exhibits a magnesium- and ATP-dependent DNA-helicase activity that unwinds single- and double-stranded DNA in a 3'-5' direction. Plays a role in restoring regressed replication forks. Required to restart stalled replication forks induced by abortive topoisomerase 1 and 2 lesions. May play a role in the repair of DNA that is damaged by ultraviolet light or other mutagens. The chain is ATP-dependent DNA helicase Q1 (RECQL) from Pongo abelii (Sumatran orangutan).